The primary structure comprises 416 residues: UDP-N-acetylglucosamine 1-carboxyvinyltransferase (416 aa).

K22–N23 is a binding site for phosphoenolpyruvate. Residue R91 participates in UDP-N-acetyl-alpha-D-glucosamine binding. Catalysis depends on C115, which acts as the Proton donor. C115 carries the 2-(S-cysteinyl)pyruvic acid O-phosphothioketal modification. Residues R120–L124, D303, and I325 each bind UDP-N-acetyl-alpha-D-glucosamine.

Belongs to the EPSP synthase family. MurA subfamily.

The protein resides in the cytoplasm. It carries out the reaction phosphoenolpyruvate + UDP-N-acetyl-alpha-D-glucosamine = UDP-N-acetyl-3-O-(1-carboxyvinyl)-alpha-D-glucosamine + phosphate. It functions in the pathway cell wall biogenesis; peptidoglycan biosynthesis. Cell wall formation. Adds enolpyruvyl to UDP-N-acetylglucosamine. This is UDP-N-acetylglucosamine 1-carboxyvinyltransferase from Oleidesulfovibrio alaskensis (strain ATCC BAA-1058 / DSM 17464 / G20) (Desulfovibrio alaskensis).